We begin with the raw amino-acid sequence, 684 residues long: Probable Xaa-Pro aminopeptidase P (684 aa).

Mn(2+) contacts are provided by D481, D492, E590, and E604.

This sequence belongs to the peptidase M24B family. Mn(2+) is required as a cofactor.

The enzyme catalyses Release of any N-terminal amino acid, including proline, that is linked to proline, even from a dipeptide or tripeptide.. In terms of biological role, catalyzes the removal of a penultimate prolyl residue from the N-termini of peptides. The sequence is that of Probable Xaa-Pro aminopeptidase P (ampp) from Neurospora crassa (strain ATCC 24698 / 74-OR23-1A / CBS 708.71 / DSM 1257 / FGSC 987).